The following is a 427-amino-acid chain: Phosphatidylserine decarboxylase proenzyme 1, mitochondrial (427 aa).

Residues 1 to 77 (MRSYLRFSDR…RRFVYKLDQA (77 aa)) constitute a mitochondrion transit peptide. Residues 78–88 (VTAALGPNGRY) are Mitochondrial matrix-facing. The helical transmembrane segment at 89 to 107 (IAMVGMTASAVLLTFHYKF) threads the bilayer. Residues 108–427 (REVIAATDNV…TEDERLFAFY (320 aa)) lie on the Mitochondrial intermembrane side of the membrane. Catalysis depends on charge relay system; for autoendoproteolytic cleavage activity residues Asp-210, His-268, and Ser-379. The active-site Schiff-base intermediate with substrate; via pyruvic acid; for decarboxylase activity is Ser-379. Position 379 is a pyruvic acid (Ser); by autocatalysis (Ser-379).

The protein belongs to the phosphatidylserine decarboxylase family. PSD-B subfamily. Eukaryotic type I sub-subfamily. Heterodimer of a large membrane-associated beta subunit and a small pyruvoyl-containing alpha subunit. The cofactor is pyruvate. In terms of processing, is synthesized initially as an inactive proenzyme. Formation of the active enzyme involves a self-maturation process in which the active site pyruvoyl group is generated from an internal serine residue via an autocatalytic post-translational modification. Two non-identical subunits are generated from the proenzyme in this reaction, and the pyruvate is formed at the N-terminus of the alpha chain, which is derived from the carboxyl end of the proenzyme. The autoendoproteolytic cleavage occurs by a canonical serine protease mechanism, in which the side chain hydroxyl group of the serine supplies its oxygen atom to form the C-terminus of the beta chain, while the remainder of the serine residue undergoes an oxidative deamination to produce ammonia and the pyruvoyl prosthetic group on the alpha chain. During this reaction, the Ser that is part of the protease active site of the proenzyme becomes the pyruvoyl prosthetic group, which constitutes an essential element of the active site of the mature decarboxylase.

It is found in the mitochondrion. The protein localises to the mitochondrion inner membrane. It carries out the reaction a 1,2-diacyl-sn-glycero-3-phospho-L-serine + H(+) = a 1,2-diacyl-sn-glycero-3-phosphoethanolamine + CO2. The protein operates within phospholipid metabolism; phosphatidylethanolamine biosynthesis; phosphatidylethanolamine from CDP-diacylglycerol: step 2/2. In terms of biological role, catalyzes the formation of phosphatidylethanolamine (PtdEtn) from phosphatidylserine (PtdSer). Plays a central role in phospholipid metabolism and in the interorganelle trafficking of phosphatidylserine. The chain is Phosphatidylserine decarboxylase proenzyme 1, mitochondrial from Toxoplasma gondii (strain ATCC 50853 / GT1).